A 206-amino-acid polypeptide reads, in one-letter code: Ectodysplasin-A receptor-associated adapter protein (206 aa).

Disordered stretches follow at residues 1-36 (MRPL…DKYP) and 52-77 (TLNC…TGDP). Composition is skewed to polar residues over residues 24–33 (PSTLSFNTSD) and 52–62 (TLNCPPNSDMK). The Death domain maps to 114–190 (DVIRIKLDPC…DVEKVLRRWV (77 aa)).

As to quaternary structure, self-associates and binds to EDAR, TRAF1, TRAF2 and TRAF3.

Its subcellular location is the cytoplasm. Its function is as follows. Adapter protein that interacts with EDAR DEATH domain and couples the receptor to EDA signaling pathway during morphogenesis of ectodermal organs. Mediates the activation of NF-kappa-B. This chain is Ectodysplasin-A receptor-associated adapter protein (EDARADD), found in Macaca fascicularis (Crab-eating macaque).